Here is a 50-residue protein sequence, read N- to C-terminus: Protein PsbN (50 aa).

A helical membrane pass occupies residues 14 to 34; sequence VAVTILAVLLALTGFGLWTAF.

The protein belongs to the PsbN family.

It is found in the cellular thylakoid membrane. Its function is as follows. May play a role in photosystem I and II biogenesis. The polypeptide is Protein PsbN (Prochlorococcus marinus (strain MIT 9515)).